A 264-amino-acid polypeptide reads, in one-letter code: 3-methyl-2-oxobutanoate hydroxymethyltransferase 2 (264 aa).

2 residues coordinate Mg(2+): aspartate 44 and aspartate 83. Residues 44–45, aspartate 83, and lysine 111 contribute to the 3-methyl-2-oxobutanoate site; that span reads DS. Residue glutamate 113 participates in Mg(2+) binding. Glutamate 180 serves as the catalytic Proton acceptor.

Belongs to the PanB family. In terms of assembly, homodecamer; pentamer of dimers. Mg(2+) serves as cofactor.

Its subcellular location is the cytoplasm. The enzyme catalyses 3-methyl-2-oxobutanoate + (6R)-5,10-methylene-5,6,7,8-tetrahydrofolate + H2O = 2-dehydropantoate + (6S)-5,6,7,8-tetrahydrofolate. Its pathway is cofactor biosynthesis; (R)-pantothenate biosynthesis; (R)-pantoate from 3-methyl-2-oxobutanoate: step 1/2. Catalyzes the reversible reaction in which hydroxymethyl group from 5,10-methylenetetrahydrofolate is transferred onto alpha-ketoisovalerate to form ketopantoate. This Hahella chejuensis (strain KCTC 2396) protein is 3-methyl-2-oxobutanoate hydroxymethyltransferase 2.